An 838-amino-acid polypeptide reads, in one-letter code: P protein (838 aa).

Residues 1–179 (MHLEGRDGRR…KLRRCVQWLK (179 aa)) lie on the Cytoplasmic side of the membrane. 2 disordered regions span residues 38–60 (LPRG…GQSS) and 74–94 (KGRS…DSCF). The span at 78-87 (HSSLPQMSSS) shows a compositional bias: polar residues. A helical transmembrane segment spans residues 180–197 (VMGLFAFVVLCSILFSLY). At 198–330 (PDQGKLWQLL…QYLRGSVETQ (133 aa)) the chain is on the extracellular side. N-linked (GlcNAc...) asparagine glycans are attached at residues N214, N218, and N273. A helical membrane pass occupies residues 331-347 (VTIATAILAGVYALIIF). The Cytoplasmic segment spans residues 348–353 (EIVHRT). Residues 354–370 (LAAMLGSLAALAALAVI) traverse the membrane as a helical segment. At 371–384 (GDRPSLTHVVEWID) the chain is on the extracellular side. Residues 385–401 (FETLALLFGMMILVAIF) traverse the membrane as a helical segment. Over 402-423 (SETGFFDYCAVKAYRLSRGRVW) the chain is Cytoplasmic. A helical membrane pass occupies residues 424 to 440 (AMIIMLCLIAAVLSAFL). Residues 441–513 (DNVTTMLLFT…DFAGFTAHMF (73 aa)) lie on the Extracellular side of the membrane. N-linked (GlcNAc...) asparagine glycosylation occurs at N442. The chain crosses the membrane as a helical span at residues 514 to 530 (IGICLVLLVCFPLLRLL). Over 531-620 (YWNRKLYNKE…LQKKHRISDG (90 aa)) the chain is Cytoplasmic. The chain crosses the membrane as a helical span at residues 621 to 637 (ILLAKCLTVLGFVIFMF). The Extracellular portion of the chain corresponds to 638–647 (FLNSFVPGIH). A helical membrane pass occupies residues 648-664 (LDLGWIAILGAIWLLIL). Residues 665 to 679 (ADIHDFEIILHRVEW) lie on the Cytoplasmic side of the membrane. A helical transmembrane segment spans residues 680–696 (ATLLFFAALFVLMEALA). The Extracellular portion of the chain corresponds to 697–720 (HLHLIEYVGEQTALLIKMVPEEQR). The chain crosses the membrane as a helical span at residues 721–737 (LIAAIVLVVWVSALASS). The Cytoplasmic portion of the chain corresponds to 738–760 (LIDNIPFTATMIPVLLNLSHDPE). Residues 761–777 (VGLPAPPLMYALAFGAC) form a helical membrane-spanning segment. Residues 778 to 817 (LGGNGTLIGASANVVCAGIAEQHGYGFSFMEFFRLGFPMM) are Extracellular-facing. N-linked (GlcNAc...) asparagine glycosylation occurs at N781. A helical membrane pass occupies residues 818 to 834 (VVSCTVGMCYLLVAHVV). Topologically, residues 835–838 (VGWN) are cytoplasmic.

Belongs to the CitM (TC 2.A.11) transporter family. As to expression, expressed in melanocytes and retinal pigment epithelium.

It localises to the melanosome membrane. It catalyses the reaction chloride(in) = chloride(out). Contributes to a melanosome-specific anion (chloride) current that modulates melanosomal pH for optimal tyrosinase activity required for melanogenesis and the melanosome maturation. One of the components of the mammalian pigmentary system. May serve as a key control point at which ethnic skin color variation is determined. Major determinant of brown and/or blue eye color. Seems to regulate the post-translational processing of tyrosinase, which catalyzes the limiting reaction in melanin synthesis. The sequence is that of P protein from Homo sapiens (Human).